Reading from the N-terminus, the 454-residue chain is DNA-binding protein BIN4 (454 aa).

3 disordered regions span residues 24-53, 103-249, and 380-454; these read LLSLSSSDDDSPYRESEVISSLPLPDDDGD, AGKE…DKDT, and TFES…KAKK. Positions 112-123 are enriched in basic and acidic residues; that stretch reads DCEKLSSKHKDA. Polar residues predominate over residues 132 to 150; sequence LVSSDSEPSSPIKQEVTVS. A compositionally biased stretch (basic and acidic residues) spans 229 to 249; the sequence is TPKEENCAQEILKTEDKDKDT. Over residues 438–454 the composition is skewed to basic residues; that stretch reads PAKKARNSAPKKPKAKK.

As to quaternary structure, interacts with TOP6A, RHL1 and itself, but not with TOP6B. Expressed in expanding cotyledons, vascular cells, elongating root cells, developing leaf trichomes, root and apical meristems and lateral root primordia.

It localises to the nucleus. Component of the DNA topoisomerase VI complex. Binds to DNA. Required for chromatin organization and progression of endoreduplication cycles. The loss of BIN4 activates the ATM- and ATR-dependent DNA damage responses in postmitotic cells and induces the ectopic expression of the mitotic G2/M-specific cyclin B1;1 gene in non-dividing cells. In Arabidopsis thaliana (Mouse-ear cress), this protein is DNA-binding protein BIN4 (BIN4).